A 560-amino-acid polypeptide reads, in one-letter code: Trafficking protein particle complex II-specific subunit 65 (560 aa).

Residues 164–193 form a disordered region; the sequence is SSKNTNNHLEKNNRATHRVSSKNSEVHEAD. Residues Ser393 and Ser398 each carry the phosphoserine modification.

As to quaternary structure, part of the multisubunit TRAPP (transport protein particle) II complex composed of BET3, BET5, TRS20, TRS23, TRS31, TRS33, TRS65, TRS120 and TRS130. Interacts directly with TRS120 and TRS130.

The protein localises to the cytoplasm. The protein resides in the golgi apparatus. It is found in the cis-Golgi network. It participates in glycan metabolism; beta-glucan biosynthesis. Its function is as follows. Specific subunit of the TRAPP II complex, a highly conserved vesicle tethering complex that functions in the late Golgi as a guanine nucleotide exchanger (GEF) for the Golgi YPT1 GTPase. TRS65 plays a role in the YPT GEF activity of TRAPP II in concert with the two other TRAPP II-specific subunits TRS120 and TRS130. Involved in cell wall (1--&gt;6)-beta-glucan synthesis. In Saccharomyces cerevisiae (strain ATCC 204508 / S288c) (Baker's yeast), this protein is Trafficking protein particle complex II-specific subunit 65 (TRS65).